A 120-amino-acid chain; its full sequence is NAD(P)H-quinone oxidoreductase subunit 3, chloroplastic (120 aa).

3 helical membrane passes run 9-29 (IFWA…LISG), 64-84 (MFAL…PWAM), and 88-108 (VLGV…IIGS).

It belongs to the complex I subunit 3 family. NDH is composed of at least 16 different subunits, 5 of which are encoded in the nucleus.

The protein resides in the plastid. The protein localises to the chloroplast thylakoid membrane. The catalysed reaction is a plastoquinone + NADH + (n+1) H(+)(in) = a plastoquinol + NAD(+) + n H(+)(out). It catalyses the reaction a plastoquinone + NADPH + (n+1) H(+)(in) = a plastoquinol + NADP(+) + n H(+)(out). NDH shuttles electrons from NAD(P)H:plastoquinone, via FMN and iron-sulfur (Fe-S) centers, to quinones in the photosynthetic chain and possibly in a chloroplast respiratory chain. The immediate electron acceptor for the enzyme in this species is believed to be plastoquinone. Couples the redox reaction to proton translocation, and thus conserves the redox energy in a proton gradient. The polypeptide is NAD(P)H-quinone oxidoreductase subunit 3, chloroplastic (Drimys granadensis).